Here is a 471-residue protein sequence, read N- to C-terminus: V-type ATP synthase beta chain (471 aa).

This sequence belongs to the ATPase alpha/beta chains family.

Produces ATP from ADP in the presence of a proton gradient across the membrane. The V-type beta chain is a regulatory subunit. In Streptococcus pyogenes serotype M49 (strain NZ131), this protein is V-type ATP synthase beta chain.